The chain runs to 47 residues: Exoenzymes regulatory protein AepH (47 aa).

2 stretches are compositionally biased toward basic and acidic residues: residues 1 to 17 (MGQE…QDGH) and 33 to 47 (TKKE…DANV). A disordered region spans residues 1-47 (MGQEPKGIESRKIQDGHVRKKVGRQQGLWVRTTKKEKFSRMSRDANV).

Involved in the control of extracellular enzymes production. Stimulates PEL, PEH, CEL, and PRT production. In Pectobacterium carotovorum subsp. carotovorum (Erwinia carotovora subsp. carotovora), this protein is Exoenzymes regulatory protein AepH (aepH).